We begin with the raw amino-acid sequence, 366 residues long: GTP cyclohydrolase 1 type 2 homolog (366 aa).

Positions 64, 65, 102, 326, and 329 each coordinate Zn(2+).

Belongs to the GTP cyclohydrolase I type 2/NIF3 family. In terms of assembly, toroid-shaped homohexamer that has a central cavity of about 38 Angstroms diameter.

The polypeptide is GTP cyclohydrolase 1 type 2 homolog (Staphylococcus aureus (strain Mu50 / ATCC 700699)).